Here is a 410-residue protein sequence, read N- to C-terminus: Transposase for insertion sequence element IS801 (410 aa).

Belongs to the transposase 32 family.

Functionally, involved in the transposition of the insertion sequence. The sequence is that of Transposase for insertion sequence element IS801 from Pseudomonas savastanoi pv. phaseolicola (Pseudomonas syringae pv. phaseolicola).